Consider the following 555-residue polypeptide: B3 domain-containing protein REM10 (555 aa).

4 consecutive DNA-binding regions (TF-B3) follow at residues 11–103, 150–247, 276–372, and 460–554; these read NPQF…LGPS, CFVA…FPMT, SFVA…LPLN, and SQNR…FCSK.

It localises to the nucleus. The protein is B3 domain-containing protein REM10 (REM10) of Arabidopsis thaliana (Mouse-ear cress).